The sequence spans 303 residues: Taste receptor type 2 member 2 (303 aa).

Over 1 to 10 (MALSFSAILH) the chain is Extracellular. The chain crosses the membrane as a helical span at residues 11 to 31 (IIMMSAEFFTGITVNGFLIIV). Residues 32–56 (NCNELIKHRKLMPIQILLMCIGMSR) lie on the Cytoplasmic side of the membrane. The helical transmembrane segment at 57-77 (FGLQMVLMVQSFFSVFFPLLY) threads the bilayer. Over 78–79 (VK) the chain is Extracellular. A helical transmembrane segment spans residues 80 to 100 (IIYGAAMMFLWMFFSSISLWF). At 101-102 (AT) the chain is on the cytoplasmic side. The helical transmembrane segment at 103-123 (CLSVFYCLKISGFTQSCFLWL) threads the bilayer. The Extracellular portion of the chain corresponds to 124 to 129 (KFRIPK). A helical transmembrane segment spans residues 130 to 150 (LIPWLLLGSVLASVSIASVCI). Residues 151-185 (EVDYAKNVEEDALRNTTLKKSKTKIKKISEVLLVN) are Cytoplasmic-facing. Residues 186–206 (LALIFPLAIFVMCTSMLLISL) traverse the membrane as a helical segment. The Extracellular segment spans residues 207-234 (YKHTHRMQHGSHGFRNANTEAHINALKT). The helical transmembrane segment at 235–255 (VITFFCFFISYFAAFMTNMTF) threads the bilayer. Topologically, residues 256-277 (SLPYRSHQFFMLKDIMAAYPSG) are cytoplasmic.

It belongs to the G-protein coupled receptor T2R family.

It localises to the cell membrane. Its function is as follows. Bitter taste receptor that detects natural and synthetic bitter compounds. This chain is Taste receptor type 2 member 2, found in Homo sapiens (Human).